The sequence spans 312 residues: MLQYQIDRVDYQIADDQSQSGVFVIGPLDRGQATTLGTALRRVLMSGLEGTAVTAVRIAGVNHEYATVPGVREDVLDILLNCKELVLSSRSRDTEIGRLVVNGPASVTAGDLQFSSQVSVVNADCPIATVADGHALELEVHVERGVGYRPVERTSEDAAALDLLQIDAVFMPVRRVNFTVDETAVGEGGSARERLRLEINTNGSITPDDALAYAANQLIALFQPLATVTLAEEPGQEPEPSAESQIPLEELNLSVRAYNCLKRAQVNSVSDLMGFSYEDLLEIKNFGAKSADEVIEALERIGISLPQSRTTA.

An alpha N-terminal domain (alpha-NTD) region spans residues 1–229; sequence MLQYQIDRVD…ALFQPLATVT (229 aa). Positions 241–312 are alpha C-terminal domain (alpha-CTD); it reads SAESQIPLEE…ISLPQSRTTA (72 aa).

Belongs to the RNA polymerase alpha chain family. As to quaternary structure, in cyanobacteria the RNAP catalytic core is composed of 2 alpha, 1 beta, 1 beta', 1 gamma and 1 omega subunit. When a sigma factor is associated with the core the holoenzyme is formed, which can initiate transcription.

The enzyme catalyses RNA(n) + a ribonucleoside 5'-triphosphate = RNA(n+1) + diphosphate. Its function is as follows. DNA-dependent RNA polymerase catalyzes the transcription of DNA into RNA using the four ribonucleoside triphosphates as substrates. The polypeptide is DNA-directed RNA polymerase subunit alpha (Synechococcus sp. (strain RCC307)).